The chain runs to 547 residues: TBCC domain-containing protein 1 (547 aa).

One can recognise a C-CAP/cofactor C-like domain in the interval 304–435 (PHTHRMVVMS…LEDHMAQTGL (132 aa)).

Belongs to the TBCC family.

The protein localises to the cytoplasm. The protein resides in the cytoskeleton. It is found in the microtubule organizing center. Its subcellular location is the centrosome. It localises to the spindle pole. Functionally, may play a role in the regulation of centrosome and Golgi apparatus positioning. This chain is TBCC domain-containing protein 1 (tbccd1), found in Xenopus laevis (African clawed frog).